A 293-amino-acid chain; its full sequence is MSLIDWFAARRKDQFVGKVSQDTDEGDGLWVKCSECSQVAYRKDLISNFNVCSNCNHHNRINSDERINIVADKDSFKEFDSSLSPTDPLGFKDRRSYADRIKDSQTSTGLRDGVITGFCSVNSMPLALAVMDFRFMGGSMGSVVGEKITRIIERATKKNYPILIVCASGGARMQEGMLSLMQMAKISGALKKHKEKNLLYMPLLTHPTTGGVTASFAMLGDLILAEPKALIGFAGRRVIEQTLREKLPDNFQTAEYLLEHGFVDVIVKRRELKTTLTKILKIHGVNELVEANI.

In terms of domain architecture, CoA carboxyltransferase N-terminal spans 29 to 293 (LWVKCSECSQ…GVNELVEANI (265 aa)). Residues Cys-33, Cys-36, Cys-52, and Cys-55 each contribute to the Zn(2+) site. The C4-type zinc finger occupies 33 to 55 (CSECSQVAYRKDLISNFNVCSNC).

It belongs to the AccD/PCCB family. As to quaternary structure, acetyl-CoA carboxylase is a heterohexamer composed of biotin carboxyl carrier protein (AccB), biotin carboxylase (AccC) and two subunits each of ACCase subunit alpha (AccA) and ACCase subunit beta (AccD). Requires Zn(2+) as cofactor.

It is found in the cytoplasm. The enzyme catalyses N(6)-carboxybiotinyl-L-lysyl-[protein] + acetyl-CoA = N(6)-biotinyl-L-lysyl-[protein] + malonyl-CoA. It participates in lipid metabolism; malonyl-CoA biosynthesis; malonyl-CoA from acetyl-CoA: step 1/1. Its function is as follows. Component of the acetyl coenzyme A carboxylase (ACC) complex. Biotin carboxylase (BC) catalyzes the carboxylation of biotin on its carrier protein (BCCP) and then the CO(2) group is transferred by the transcarboxylase to acetyl-CoA to form malonyl-CoA. The sequence is that of Acetyl-coenzyme A carboxylase carboxyl transferase subunit beta from Prochlorococcus marinus (strain MIT 9215).